A 441-amino-acid chain; its full sequence is Homogentisate 1,2-dioxygenase (441 aa).

Histidine 287 functions as the Proton acceptor in the catalytic mechanism. The Fe cation site is built by histidine 330 and glutamate 336. Tyrosine 345 and histidine 366 together coordinate homogentisate. Residue histidine 366 participates in Fe cation binding.

It belongs to the homogentisate dioxygenase family. In terms of assembly, hexamer; dimer of trimers. It depends on Fe cation as a cofactor.

It catalyses the reaction homogentisate + O2 = 4-maleylacetoacetate + H(+). It participates in amino-acid degradation; L-phenylalanine degradation; acetoacetate and fumarate from L-phenylalanine: step 4/6. Involved in the catabolism of homogentisate (2,5-dihydroxyphenylacetate or 2,5-OH-PhAc), a central intermediate in the degradation of phenylalanine and tyrosine. Catalyzes the oxidative ring cleavage of the aromatic ring of homogentisate to yield maleylacetoacetate. The polypeptide is Homogentisate 1,2-dioxygenase (Xanthomonas oryzae pv. oryzae (strain KACC10331 / KXO85)).